Here is a 220-residue protein sequence, read N- to C-terminus: Probable chemoreceptor glutamine deamidase CheD (220 aa).

It belongs to the CheD family.

It carries out the reaction L-glutaminyl-[protein] + H2O = L-glutamyl-[protein] + NH4(+). Functionally, probably deamidates glutamine residues to glutamate on methyl-accepting chemotaxis receptors (MCPs), playing an important role in chemotaxis. This is Probable chemoreceptor glutamine deamidase CheD from Cupriavidus metallidurans (strain ATCC 43123 / DSM 2839 / NBRC 102507 / CH34) (Ralstonia metallidurans).